Consider the following 173-residue polypeptide: Probable chemoreceptor glutamine deamidase CheD (173 aa).

Belongs to the CheD family.

The enzyme catalyses L-glutaminyl-[protein] + H2O = L-glutamyl-[protein] + NH4(+). Probably deamidates glutamine residues to glutamate on methyl-accepting chemotaxis receptors (MCPs), playing an important role in chemotaxis. In Haloarcula marismortui (strain ATCC 43049 / DSM 3752 / JCM 8966 / VKM B-1809) (Halobacterium marismortui), this protein is Probable chemoreceptor glutamine deamidase CheD.